A 196-amino-acid chain; its full sequence is dTTP/UTP pyrophosphatase (196 aa).

Catalysis depends on Asp-73, which acts as the Proton acceptor.

Belongs to the Maf family. YhdE subfamily. A divalent metal cation serves as cofactor.

Its subcellular location is the cytoplasm. It catalyses the reaction dTTP + H2O = dTMP + diphosphate + H(+). The enzyme catalyses UTP + H2O = UMP + diphosphate + H(+). In terms of biological role, nucleoside triphosphate pyrophosphatase that hydrolyzes dTTP and UTP. May have a dual role in cell division arrest and in preventing the incorporation of modified nucleotides into cellular nucleic acids. This Myxococcus xanthus (strain DK1622) protein is dTTP/UTP pyrophosphatase.